The following is a 111-amino-acid chain: Large ribosomal subunit protein P2B (111 aa).

Positions 62-111 (LASVPSGGAAAGGASASTGAAAGGAAEAEEEKEEEAKEESDDDMGFGLFD) are disordered. Low complexity predominate over residues 67 to 87 (SGGAAAGGASASTGAAAGGAA). Residues 88 to 105 (EAEEEKEEEAKEESDDDM) show a composition bias toward acidic residues. Ser-101 carries the phosphoserine modification.

This sequence belongs to the eukaryotic ribosomal protein P1/P2 family.

Its function is as follows. Plays an important role in the elongation step of protein synthesis. The protein is Large ribosomal subunit protein P2B (RPP2B) of Candida albicans (Yeast).